Here is a 218-residue protein sequence, read N- to C-terminus: Protein N-lysine methyltransferase METTL21A (218 aa).

S-adenosyl-L-methionine-binding positions include W47, 73 to 75 (GAG), D94, W125, and A143.

This sequence belongs to the methyltransferase superfamily. METTL21 family. As to quaternary structure, interacts with heat shock protein 70 family members; at least some of these proteins are methylation substrates.

It is found in the cytoplasm. It carries out the reaction L-lysyl-[protein] + 3 S-adenosyl-L-methionine = N(6),N(6),N(6)-trimethyl-L-lysyl-[protein] + 3 S-adenosyl-L-homocysteine + 3 H(+). Protein-lysine methyltransferase that selectively trimethylates residues in heat shock protein 70 (HSP70) family members. Contributes to the in vivo trimethylation of Lys residues in HSPA1 and HSPA8. In vitro methylates 'Lys-561' in HSPA1, 'Lys-564' in HSPA2, 'Lys-585' in HSPA5, 'Lys-563' in HSPA6 and 'Lys-561' in HSPA8. This is Protein N-lysine methyltransferase METTL21A (METTL21A) from Homo sapiens (Human).